Here is a 373-residue protein sequence, read N- to C-terminus: Queuine tRNA-ribosyltransferase (373 aa).

Catalysis depends on Asp-89, which acts as the Proton acceptor. Substrate contacts are provided by residues 89-93 (DSGGF), Asp-143, Gln-187, and Gly-214. Residues 245–251 (GVGKPED) are RNA binding. The active-site Nucleophile is the Asp-264. The interval 269-273 (TRNAR) is RNA binding; important for wobble base 34 recognition. The Zn(2+) site is built by Cys-302, Cys-304, Cys-307, and His-333.

Belongs to the queuine tRNA-ribosyltransferase family. As to quaternary structure, homodimer. Within each dimer, one monomer is responsible for RNA recognition and catalysis, while the other monomer binds to the replacement base PreQ1. The cofactor is Zn(2+).

The catalysed reaction is 7-aminomethyl-7-carbaguanine + guanosine(34) in tRNA = 7-aminomethyl-7-carbaguanosine(34) in tRNA + guanine. The protein operates within tRNA modification; tRNA-queuosine biosynthesis. In terms of biological role, catalyzes the base-exchange of a guanine (G) residue with the queuine precursor 7-aminomethyl-7-deazaguanine (PreQ1) at position 34 (anticodon wobble position) in tRNAs with GU(N) anticodons (tRNA-Asp, -Asn, -His and -Tyr). Catalysis occurs through a double-displacement mechanism. The nucleophile active site attacks the C1' of nucleotide 34 to detach the guanine base from the RNA, forming a covalent enzyme-RNA intermediate. The proton acceptor active site deprotonates the incoming PreQ1, allowing a nucleophilic attack on the C1' of the ribose to form the product. After dissociation, two additional enzymatic reactions on the tRNA convert PreQ1 to queuine (Q), resulting in the hypermodified nucleoside queuosine (7-(((4,5-cis-dihydroxy-2-cyclopenten-1-yl)amino)methyl)-7-deazaguanosine). The protein is Queuine tRNA-ribosyltransferase of Tolumonas auensis (strain DSM 9187 / NBRC 110442 / TA 4).